The chain runs to 132 residues: Small ribosomal subunit protein uS11 (132 aa).

The protein belongs to the universal ribosomal protein uS11 family. Part of the 30S ribosomal subunit. Interacts with proteins S7 and S18. Binds to IF-3.

Functionally, located on the platform of the 30S subunit, it bridges several disparate RNA helices of the 16S rRNA. Forms part of the Shine-Dalgarno cleft in the 70S ribosome. This Bifidobacterium animalis subsp. lactis (strain AD011) protein is Small ribosomal subunit protein uS11.